The chain runs to 544 residues: Chaperonin GroEL 1 (544 aa).

Residues 30 to 33 (TLGP), Lys51, 87 to 91 (DGTTT), Gly415, 481 to 483 (DAL), and Asp497 contribute to the ATP site.

It belongs to the chaperonin (HSP60) family. Forms a cylinder of 14 subunits composed of two heptameric rings stacked back-to-back. Interacts with the co-chaperonin GroES.

It is found in the cytoplasm. It carries out the reaction ATP + H2O + a folded polypeptide = ADP + phosphate + an unfolded polypeptide.. Together with its co-chaperonin GroES, plays an essential role in assisting protein folding. The GroEL-GroES system forms a nano-cage that allows encapsulation of the non-native substrate proteins and provides a physical environment optimized to promote and accelerate protein folding. The protein is Chaperonin GroEL 1 of Chlamydia caviae (strain ATCC VR-813 / DSM 19441 / 03DC25 / GPIC) (Chlamydophila caviae).